The sequence spans 171 residues: Plastocyanin minor isoform, chloroplastic (171 aa).

In terms of domain architecture, Plastocyanin-like spans 73–171 (MEVLLGSDDG…AGMVGKLTVK (99 aa)). Cu cation contacts are provided by H109, C156, H159, and M164.

The protein belongs to the plastocyanin family. Requires Cu(2+) as cofactor.

The protein localises to the plastid. It is found in the chloroplast thylakoid membrane. Functionally, participates in electron transfer between P700 and the cytochrome b6-f complex in photosystem I. Seems to be a minor plastocyanin in Arabidopsis. This Arabidopsis thaliana (Mouse-ear cress) protein is Plastocyanin minor isoform, chloroplastic (PETE).